Reading from the N-terminus, the 411-residue chain is Adenylosuccinate synthetase (411 aa).

GTP contacts are provided by residues 11-17 and 39-41; these read GDEGKGK and GHT. Residue Asp12 is the Proton acceptor of the active site. Positions 12 and 39 each coordinate Mg(2+). IMP-binding positions include 12-15, 37-40, Thr121, Arg135, Gln215, Thr230, and Arg294; these read DEGK and NAGH. His40 functions as the Proton donor in the catalytic mechanism. 290–296 provides a ligand contact to substrate; sequence TTTKRPR. GTP is bound by residues Arg296, 322-324, and 400-402; these read KLD and STS.

The protein belongs to the adenylosuccinate synthetase family. Homodimer. Mg(2+) is required as a cofactor.

It is found in the cytoplasm. It carries out the reaction IMP + L-aspartate + GTP = N(6)-(1,2-dicarboxyethyl)-AMP + GDP + phosphate + 2 H(+). The protein operates within purine metabolism; AMP biosynthesis via de novo pathway; AMP from IMP: step 1/2. In terms of biological role, plays an important role in the de novo pathway of purine nucleotide biosynthesis. Catalyzes the first committed step in the biosynthesis of AMP from IMP. This Helicobacter pylori (strain ATCC 700392 / 26695) (Campylobacter pylori) protein is Adenylosuccinate synthetase.